The chain runs to 307 residues: UDP-3-O-acyl-N-acetylglucosamine deacetylase (307 aa).

Positions 78, 241, and 245 each coordinate Zn(2+). His268 acts as the Proton donor in catalysis.

It belongs to the LpxC family. It depends on Zn(2+) as a cofactor.

The catalysed reaction is a UDP-3-O-[(3R)-3-hydroxyacyl]-N-acetyl-alpha-D-glucosamine + H2O = a UDP-3-O-[(3R)-3-hydroxyacyl]-alpha-D-glucosamine + acetate. It participates in glycolipid biosynthesis; lipid IV(A) biosynthesis; lipid IV(A) from (3R)-3-hydroxytetradecanoyl-[acyl-carrier-protein] and UDP-N-acetyl-alpha-D-glucosamine: step 2/6. Its function is as follows. Catalyzes the hydrolysis of UDP-3-O-myristoyl-N-acetylglucosamine to form UDP-3-O-myristoylglucosamine and acetate, the committed step in lipid A biosynthesis. This is UDP-3-O-acyl-N-acetylglucosamine deacetylase from Variovorax paradoxus (strain S110).